Reading from the N-terminus, the 488-residue chain is pH-response regulator protein palC (488 aa).

The 429-residue stretch at 2–430 (PPYLYRLPTT…TVAFQPVPPV (429 aa)) folds into the BRO1 domain. The tract at residues 449–488 (PPPSKFSPSRIGHLNEEQGNDSPELGETEDTSYAGKGNYF) is disordered.

Belongs to the palC family.

Its function is as follows. Required for the proteolytic cleavage of the transcription factor RIM101 in response to alkaline ambient pH. This is pH-response regulator protein palC from Cryptococcus neoformans var. neoformans serotype D (strain B-3501A) (Filobasidiella neoformans).